Consider the following 177-residue polypeptide: Large ribosomal subunit protein uL6 (177 aa).

This sequence belongs to the universal ribosomal protein uL6 family. In terms of assembly, part of the 50S ribosomal subunit.

In terms of biological role, this protein binds to the 23S rRNA, and is important in its secondary structure. It is located near the subunit interface in the base of the L7/L12 stalk, and near the tRNA binding site of the peptidyltransferase center. This chain is Large ribosomal subunit protein uL6, found in Brucella melitensis biotype 1 (strain ATCC 23456 / CCUG 17765 / NCTC 10094 / 16M).